Here is a 120-residue protein sequence, read N- to C-terminus: Phosphoribosyl-ATP pyrophosphatase (120 aa).

The tract at residues 97–120 is disordered; the sequence is REGTSGLVEKASRPAKKDSGTADS. Over residues 106-120 the composition is skewed to basic and acidic residues; the sequence is KASRPAKKDSGTADS.

This sequence belongs to the PRA-PH family.

It is found in the cytoplasm. It carries out the reaction 1-(5-phospho-beta-D-ribosyl)-ATP + H2O = 1-(5-phospho-beta-D-ribosyl)-5'-AMP + diphosphate + H(+). Its pathway is amino-acid biosynthesis; L-histidine biosynthesis; L-histidine from 5-phospho-alpha-D-ribose 1-diphosphate: step 2/9. The protein is Phosphoribosyl-ATP pyrophosphatase of Rhodopirellula baltica (strain DSM 10527 / NCIMB 13988 / SH1).